Consider the following 1487-residue polypeptide: Probable serine/threonine-protein kinase roco11 (1487 aa).

The segment at 108-134 (TQPSSSHNHSNHHHHHHQQQLQQQQQQ) is disordered. Over residues 116-125 (HSNHHHHHHQ) the composition is skewed to basic residues. 3 LRR repeats span residues 295 to 316 (NLAE…ICQL), 318 to 340 (HLKI…ANLT), and 341 to 362 (NLKY…IIEQ). Residues 379-564 (KSETWNKVKL…KILTNEAEKS (186 aa)) form the Roc domain. A small GTPase-like region spans residues 379 to 564 (KSETWNKVKL…KILTNEAEKS (186 aa)). GTP contacts are provided by residues 392–399 (GQEGVGKS), 448–452 (DFGGQ), and 507–510 (THCD). The COR domain occupies 678-872 (VNQKYIDYND…KTYWANGILL (195 aa)). The tract at residues 891–1007 (SILPNNSSST…NNNNNNNNNI (117 aa)) is disordered. Low complexity predominate over residues 897–931 (SSSTSSSTSSSTSSSTSSSSSSSTSSSSTSTTTTT). Polar residues predominate over residues 932–950 (VQIQSSPFGNSTTIVNKLT). A compositionally biased stretch (low complexity) spans 951–1007 (NIDNNNNNNNNNNNNNNNNNNINNNNNNNNNNNNNNNNNNNNNNNNNNNNNNNNNNI). The 268-residue stretch at 1185–1452 (VVCEEQIGVG…YIVKELTNFY (268 aa)) folds into the Protein kinase domain. ATP-binding positions include 1191-1199 (IGVGGFGLV) and lysine 1216. Aspartate 1313 (proton acceptor) is an active-site residue. The disordered stretch occupies residues 1464–1487 (KSINDKSPHPDLISNGVPKLQIAK).

This sequence belongs to the protein kinase superfamily. TKL Ser/Thr protein kinase family. ROCO subfamily.

The enzyme catalyses L-seryl-[protein] + ATP = O-phospho-L-seryl-[protein] + ADP + H(+). It carries out the reaction L-threonyl-[protein] + ATP = O-phospho-L-threonyl-[protein] + ADP + H(+). In Dictyostelium discoideum (Social amoeba), this protein is Probable serine/threonine-protein kinase roco11 (roco11).